The sequence spans 433 residues: MGFHIYEIKARQIIDSRGNPTVEADVILEDGTCGRSAVPSGASTGINEAVELRDGDKSVYMGKGVLKAIENIKNIIAPELEGMSALNQVAIDRKMLELDGTPTKEKLGANAILAVSMATAKAAAKYLGLKVYQYLGAYKANILPTPMCNIINGGAHSDNSVDFQEFMIMPIGAKTFSEAIRMSVEVFHTLKGILHGKGYATSVGDEGGFAPNLKSNEEACEMIIEAIKKAGYEPGKDIAIALDPATSELYDPKTKKYVLKWSTKEELTSEQMVEYWSKWVEKYPIISIEDGMAEEDWDGWKKLTDKIGHKIQLVGDDLFVTNTSFLKKGIEMGVANSILIKVNQIGTLTETFEAVEMAKKAGYTAIVSHRSGETEDTTIADLVVALGTGQIKTGSLSRTDRIAKYNQLIRIEEELETTAEYHGKNVFYSIKQK.

A (2R)-2-phosphoglycerate-binding site is contributed by Gln164. Glu206 serves as the catalytic Proton donor. Asp243, Glu289, and Asp316 together coordinate Mg(2+). (2R)-2-phosphoglycerate contacts are provided by Lys341, Arg370, Ser371, and Lys392. Residue Lys341 is the Proton acceptor of the active site.

The protein belongs to the enolase family. Requires Mg(2+) as cofactor.

Its subcellular location is the cytoplasm. It localises to the secreted. It is found in the cell surface. It carries out the reaction (2R)-2-phosphoglycerate = phosphoenolpyruvate + H2O. It functions in the pathway carbohydrate degradation; glycolysis; pyruvate from D-glyceraldehyde 3-phosphate: step 4/5. Its function is as follows. Catalyzes the reversible conversion of 2-phosphoglycerate (2-PG) into phosphoenolpyruvate (PEP). It is essential for the degradation of carbohydrates via glycolysis. The chain is Enolase from Borreliella afzelii (strain PKo) (Borrelia afzelii).